A 418-amino-acid polypeptide reads, in one-letter code: 4-hydroxy-3-methylbut-2-en-1-yl diphosphate synthase (flavodoxin) (418 aa).

4 residues coordinate [4Fe-4S] cluster: Cys305, Cys308, Cys351, and Glu358.

Belongs to the IspG family. [4Fe-4S] cluster serves as cofactor.

It catalyses the reaction (2E)-4-hydroxy-3-methylbut-2-enyl diphosphate + oxidized [flavodoxin] + H2O + 2 H(+) = 2-C-methyl-D-erythritol 2,4-cyclic diphosphate + reduced [flavodoxin]. The protein operates within isoprenoid biosynthesis; isopentenyl diphosphate biosynthesis via DXP pathway; isopentenyl diphosphate from 1-deoxy-D-xylulose 5-phosphate: step 5/6. In terms of biological role, converts 2C-methyl-D-erythritol 2,4-cyclodiphosphate (ME-2,4cPP) into 1-hydroxy-2-methyl-2-(E)-butenyl 4-diphosphate. This chain is 4-hydroxy-3-methylbut-2-en-1-yl diphosphate synthase (flavodoxin), found in Bartonella bacilliformis (strain ATCC 35685 / KC583 / Herrer 020/F12,63).